The following is a 360-amino-acid chain: Phospho-N-acetylmuramoyl-pentapeptide-transferase (360 aa).

Helical transmembrane passes span Ala26–Asn46, Gly70–Trp90, Tyr97–Tyr117, Tyr134–Ile154, Gly167–Phe187, Gly199–Val219, Ala236–Phe256, Val263–Ile283, Ile288–Val308, and Val338–Lys358.

It belongs to the glycosyltransferase 4 family. MraY subfamily. Mg(2+) is required as a cofactor.

It localises to the cell inner membrane. It carries out the reaction UDP-N-acetyl-alpha-D-muramoyl-L-alanyl-gamma-D-glutamyl-meso-2,6-diaminopimeloyl-D-alanyl-D-alanine + di-trans,octa-cis-undecaprenyl phosphate = di-trans,octa-cis-undecaprenyl diphospho-N-acetyl-alpha-D-muramoyl-L-alanyl-D-glutamyl-meso-2,6-diaminopimeloyl-D-alanyl-D-alanine + UMP. The protein operates within cell wall biogenesis; peptidoglycan biosynthesis. Its function is as follows. Catalyzes the initial step of the lipid cycle reactions in the biosynthesis of the cell wall peptidoglycan: transfers peptidoglycan precursor phospho-MurNAc-pentapeptide from UDP-MurNAc-pentapeptide onto the lipid carrier undecaprenyl phosphate, yielding undecaprenyl-pyrophosphoryl-MurNAc-pentapeptide, known as lipid I. The sequence is that of Phospho-N-acetylmuramoyl-pentapeptide-transferase from Saccharophagus degradans (strain 2-40 / ATCC 43961 / DSM 17024).